Reading from the N-terminus, the 469-residue chain is UDP-N-acetylmuramoylalanine--D-glutamate ligase (469 aa).

123–129 contributes to the ATP binding site; it reads GTNGKST.

This sequence belongs to the MurCDEF family.

The protein localises to the cytoplasm. It catalyses the reaction UDP-N-acetyl-alpha-D-muramoyl-L-alanine + D-glutamate + ATP = UDP-N-acetyl-alpha-D-muramoyl-L-alanyl-D-glutamate + ADP + phosphate + H(+). The protein operates within cell wall biogenesis; peptidoglycan biosynthesis. Its function is as follows. Cell wall formation. Catalyzes the addition of glutamate to the nucleotide precursor UDP-N-acetylmuramoyl-L-alanine (UMA). This chain is UDP-N-acetylmuramoylalanine--D-glutamate ligase, found in Phenylobacterium zucineum (strain HLK1).